The following is a 306-amino-acid chain: Ornithine carbamoyltransferase (306 aa).

Carbamoyl phosphate contacts are provided by residues 51–54 (STRT), Q78, R102, and 129–132 (HPVQ). Residues N159, D223, and 227-228 (SM) contribute to the L-ornithine site. Residues 263 to 264 (CL) and R291 each bind carbamoyl phosphate.

The protein belongs to the aspartate/ornithine carbamoyltransferase superfamily. OTCase family.

The protein localises to the cytoplasm. It carries out the reaction carbamoyl phosphate + L-ornithine = L-citrulline + phosphate + H(+). The protein operates within amino-acid biosynthesis; L-arginine biosynthesis; L-arginine from L-ornithine and carbamoyl phosphate: step 1/3. In terms of biological role, reversibly catalyzes the transfer of the carbamoyl group from carbamoyl phosphate (CP) to the N(epsilon) atom of ornithine (ORN) to produce L-citrulline. This Sulfurovum sp. (strain NBC37-1) protein is Ornithine carbamoyltransferase.